A 152-amino-acid polypeptide reads, in one-letter code: Large ribosomal subunit protein bL9 (152 aa).

This sequence belongs to the bacterial ribosomal protein bL9 family.

Binds to the 23S rRNA. The chain is Large ribosomal subunit protein bL9 from Nocardia farcinica (strain IFM 10152).